The primary structure comprises 296 residues: Protoheme IX farnesyltransferase 2 (296 aa).

A run of 9 helical transmembrane segments spans residues Leu7 to Phe27, Pro36 to Leu56, Leu83 to Trp103, Leu108 to Phe128, Tyr134 to Val154, Ala163 to Phe183, Ile207 to Gly227, Ala229 to Leu249, and Phe265 to Val285.

The protein belongs to the UbiA prenyltransferase family. Protoheme IX farnesyltransferase subfamily.

Its subcellular location is the cell inner membrane. It carries out the reaction heme b + (2E,6E)-farnesyl diphosphate + H2O = Fe(II)-heme o + diphosphate. It participates in porphyrin-containing compound metabolism; heme O biosynthesis; heme O from protoheme: step 1/1. Converts heme B (protoheme IX) to heme O by substitution of the vinyl group on carbon 2 of heme B porphyrin ring with a hydroxyethyl farnesyl side group. The protein is Protoheme IX farnesyltransferase 2 of Pseudomonas aeruginosa (strain UCBPP-PA14).